Here is a 400-residue protein sequence, read N- to C-terminus: tRNA-specific 2-thiouridylase MnmA (400 aa).

Residues 19–26 (AMSGGVDS) and L45 contribute to the ATP site. C113 acts as the Nucleophile in catalysis. Cysteines 113 and 210 form a disulfide. Position 137 (G137) interacts with ATP. The interval 160–162 (RDQ) is interaction with tRNA. Catalysis depends on C210, which acts as the Cysteine persulfide intermediate.

Belongs to the MnmA/TRMU family.

The protein localises to the cytoplasm. It carries out the reaction S-sulfanyl-L-cysteinyl-[protein] + uridine(34) in tRNA + AH2 + ATP = 2-thiouridine(34) in tRNA + L-cysteinyl-[protein] + A + AMP + diphosphate + H(+). Its function is as follows. Catalyzes the 2-thiolation of uridine at the wobble position (U34) of tRNA, leading to the formation of s(2)U34. The protein is tRNA-specific 2-thiouridylase MnmA of Rhodopseudomonas palustris (strain BisB18).